We begin with the raw amino-acid sequence, 372 residues long: Glutamate 5-kinase (372 aa).

K14 lines the ATP pocket. Substrate-binding residues include S54, D141, and N153. 173–174 (TD) serves as a coordination point for ATP. The region spanning 280–358 (RGTLVLDAGA…DAIESILGYS (79 aa)) is the PUA domain.

This sequence belongs to the glutamate 5-kinase family.

The protein resides in the cytoplasm. It catalyses the reaction L-glutamate + ATP = L-glutamyl 5-phosphate + ADP. It functions in the pathway amino-acid biosynthesis; L-proline biosynthesis; L-glutamate 5-semialdehyde from L-glutamate: step 1/2. In terms of biological role, catalyzes the transfer of a phosphate group to glutamate to form L-glutamate 5-phosphate. The protein is Glutamate 5-kinase of Pseudomonas putida (strain GB-1).